Reading from the N-terminus, the 608-residue chain is DNA mismatch repair protein MutL (608 aa).

Residues 363 to 397 (ASLAMARKPDPPRFHETARPQPDPRHTPGTESVSV) form a disordered region. Residues 369 to 390 (RKPDPPRFHETARPQPDPRHTP) show a composition bias toward basic and acidic residues.

The protein belongs to the DNA mismatch repair MutL/HexB family.

Its function is as follows. This protein is involved in the repair of mismatches in DNA. It is required for dam-dependent methyl-directed DNA mismatch repair. May act as a 'molecular matchmaker', a protein that promotes the formation of a stable complex between two or more DNA-binding proteins in an ATP-dependent manner without itself being part of a final effector complex. This Pelobacter propionicus (strain DSM 2379 / NBRC 103807 / OttBd1) protein is DNA mismatch repair protein MutL.